The chain runs to 159 residues: NAD(P)H-quinone oxidoreductase subunit I, chloroplastic (159 aa).

4Fe-4S ferredoxin-type domains follow at residues 55-84 (GRIH…VDWN) and 95-124 (KNYS…MTEE). Residues C64, C67, C70, C74, C104, C107, C110, and C114 each coordinate [4Fe-4S] cluster.

This sequence belongs to the complex I 23 kDa subunit family. In terms of assembly, NDH is composed of at least 16 different subunits, 5 of which are encoded in the nucleus. It depends on [4Fe-4S] cluster as a cofactor.

Its subcellular location is the plastid. It is found in the chloroplast thylakoid membrane. The enzyme catalyses a plastoquinone + NADH + (n+1) H(+)(in) = a plastoquinol + NAD(+) + n H(+)(out). The catalysed reaction is a plastoquinone + NADPH + (n+1) H(+)(in) = a plastoquinol + NADP(+) + n H(+)(out). Functionally, NDH shuttles electrons from NAD(P)H:plastoquinone, via FMN and iron-sulfur (Fe-S) centers, to quinones in the photosynthetic chain and possibly in a chloroplast respiratory chain. The immediate electron acceptor for the enzyme in this species is believed to be plastoquinone. Couples the redox reaction to proton translocation, and thus conserves the redox energy in a proton gradient. The protein is NAD(P)H-quinone oxidoreductase subunit I, chloroplastic of Chara vulgaris (Common stonewort).